Consider the following 398-residue polypeptide: Acetate kinase (398 aa).

N7 is a binding site for Mg(2+). Residue K14 participates in ATP binding. R91 is a substrate binding site. Residue D148 is the Proton donor/acceptor of the active site. Residues H208 to G212, D283 to R285, and G331 to N335 each bind ATP. E384 contributes to the Mg(2+) binding site.

It belongs to the acetokinase family. Homodimer. It depends on Mg(2+) as a cofactor. Requires Mn(2+) as cofactor.

It is found in the cytoplasm. It catalyses the reaction acetate + ATP = acetyl phosphate + ADP. The protein operates within metabolic intermediate biosynthesis; acetyl-CoA biosynthesis; acetyl-CoA from acetate: step 1/2. Its function is as follows. Catalyzes the formation of acetyl phosphate from acetate and ATP. Can also catalyze the reverse reaction. This chain is Acetate kinase, found in Natranaerobius thermophilus (strain ATCC BAA-1301 / DSM 18059 / JW/NM-WN-LF).